Here is a 390-residue protein sequence, read N- to C-terminus: Centrosomal protein of 44 kDa (390 aa).

The interval 11-195 is binds with microtubules and centrioles; sequence RNLEQVLRLL…ISEDTLSPIT (185 aa). Residues 233–267 adopt a coiled-coil conformation; it reads EITALQTMLAECQEKLKELTLIEKRLDCLEQKMKG. A disordered region spans residues 323–347; the sequence is KNKVGRPASIPLSSRYSTASSDSTP. 2 positions are modified to phosphoserine: Ser331 and Ser345. Over residues 335–345 the composition is skewed to low complexity; it reads SSRYSTASSDS. Thr346 carries the post-translational modification Phosphothreonine. Residues 361–385 adopt a coiled-coil conformation; sequence SEETTIQKMERMKKMFEETAELLKC.

As to quaternary structure, interacts with CROCC. Interacts with POC1B; the interaction is direct and recruits POC1B to centriolar microtubules. Binds to centriolar microtubules.

It is found in the cytoplasm. The protein localises to the cytoskeleton. The protein resides in the microtubule organizing center. Its subcellular location is the centrosome. It localises to the centriole. It is found in the spindle pole. The protein localises to the midbody. Functionally, centriole-enriched microtubule-binding protein involved in centriole biogenesis. In collaboration with CEP295 and POC1B, is required for the centriole-to-centrosome conversion by ensuring the formation of bona fide centriole wall. Functions as a linker component that maintains centrosome cohesion. Associates with CROCC and regulates its stability and localization to the centrosome. This chain is Centrosomal protein of 44 kDa (CEP44), found in Macaca fascicularis (Crab-eating macaque).